Here is a 106-residue protein sequence, read N- to C-terminus: Thiosulfate sulfurtransferase GlpE (106 aa).

Residues 17 to 105 (SRGEARLVDI…WHRASLPVEA (89 aa)) enclose the Rhodanese domain. Cys65 serves as the catalytic Cysteine persulfide intermediate.

It belongs to the GlpE family.

Its subcellular location is the cytoplasm. The enzyme catalyses thiosulfate + hydrogen cyanide = thiocyanate + sulfite + 2 H(+). It catalyses the reaction thiosulfate + [thioredoxin]-dithiol = [thioredoxin]-disulfide + hydrogen sulfide + sulfite + 2 H(+). Functionally, transferase that catalyzes the transfer of sulfur from thiosulfate to thiophilic acceptors such as cyanide or dithiols. May function in a CysM-independent thiosulfate assimilation pathway by catalyzing the conversion of thiosulfate to sulfite, which can then be used for L-cysteine biosynthesis. In Vibrio vulnificus (strain CMCP6), this protein is Thiosulfate sulfurtransferase GlpE.